We begin with the raw amino-acid sequence, 556 residues long: Arginine--tRNA ligase (556 aa).

Residues 132–142 (ANPTGDLHLGH) carry the 'HIGH' region motif.

Belongs to the class-I aminoacyl-tRNA synthetase family. In terms of assembly, monomer.

The protein resides in the cytoplasm. The catalysed reaction is tRNA(Arg) + L-arginine + ATP = L-arginyl-tRNA(Arg) + AMP + diphosphate. The chain is Arginine--tRNA ligase from Shouchella clausii (strain KSM-K16) (Alkalihalobacillus clausii).